Consider the following 378-residue polypeptide: Calponin homolog OV9M (378 aa).

Over residues 1-20 (MPAQPAQENAQDADDAQANA) the composition is skewed to low complexity. The interval 1 to 35 (MPAQPAQENAQDADDAQANATMETRVAGQGQPKRV) is disordered. Calponin-like repeat units follow at residues 50 to 75 (IPSQ…RNTQ), 98 to 123 (VRLQ…RDVC), 151 to 176 (VRLQ…RRET), 197 to 222 (IPLQ…RRET), 244 to 269 (IPSQ…RWEV), 285 to 310 (VRLQ…RNTT), and 330 to 355 (IPSQ…RDVK). The segment at 175–194 (ETTKMTDSKHPDYDHERPDQ) is disordered. The interval 230–256 (HPEYDPESSIDSSTIPSQMGSNKYASQ) is disordered. Polar residues predominate over residues 238-256 (SIDSSTIPSQMGSNKYASQ). Residues 331-352 (PSQAGWNRGDSQKGMTGFGAPR) are disordered.

This sequence belongs to the calponin family. As to expression, found in the longitudinal muscles below the hypodermis.

Functionally, could be involved in muscle contraction. The protein is Calponin homolog OV9M of Onchocerca volvulus.